Reading from the N-terminus, the 452-residue chain is tRNA modification GTPase MnmE (452 aa).

Residues Arg-22, Glu-80, and Lys-119 each coordinate (6S)-5-formyl-5,6,7,8-tetrahydrofolate. The TrmE-type G domain maps to 213–375 (GVRTVIVGKP…LENKIYEKFF (163 aa)). Asn-223 contacts K(+). Residues 223-228 (NSGKST), 242-248 (TDIPGTT), and 267-270 (DTAG) contribute to the GTP site. Mg(2+) is bound at residue Ser-227. Residues Thr-242, Ile-244, and Thr-247 each contribute to the K(+) site. Thr-248 is a Mg(2+) binding site. A (6S)-5-formyl-5,6,7,8-tetrahydrofolate-binding site is contributed by Lys-452.

Belongs to the TRAFAC class TrmE-Era-EngA-EngB-Septin-like GTPase superfamily. TrmE GTPase family. Homodimer. Heterotetramer of two MnmE and two MnmG subunits. The cofactor is K(+).

It is found in the cytoplasm. Its function is as follows. Exhibits a very high intrinsic GTPase hydrolysis rate. Involved in the addition of a carboxymethylaminomethyl (cmnm) group at the wobble position (U34) of certain tRNAs, forming tRNA-cmnm(5)s(2)U34. In Petrotoga mobilis (strain DSM 10674 / SJ95), this protein is tRNA modification GTPase MnmE.